Consider the following 233-residue polypeptide: tRNA (guanine-N(1)-)-methyltransferase (233 aa).

S-adenosyl-L-methionine is bound by residues Gly-121 and 140–145 (IGDYIL).

It belongs to the RNA methyltransferase TrmD family. As to quaternary structure, homodimer.

It is found in the cytoplasm. It catalyses the reaction guanosine(37) in tRNA + S-adenosyl-L-methionine = N(1)-methylguanosine(37) in tRNA + S-adenosyl-L-homocysteine + H(+). Functionally, specifically methylates guanosine-37 in various tRNAs. This Endomicrobium trichonymphae protein is tRNA (guanine-N(1)-)-methyltransferase.